The chain runs to 1017 residues: Putative calcium-transporting ATPase 13, plasma membrane-type (1017 aa).

N-acetylmethionine is present on Met1. The Cytoplasmic segment spans residues 1–147 (MRRNVSDHAE…NTYTRQPSKG (147 aa)). Residues 20-31 (LLELPKTLSKSN) are interaction with calmodulin. The helical transmembrane segment at 148–168 (LFHFVVEAFKDLTILILLGCA) threads the bilayer. At 169-186 (TLSLGFGIKEHGLKEGWY) the chain is on the lumenal side. A helical membrane pass occupies residues 187-207 (DGGSIFVAVFLVVAVSAVSNF). The Cytoplasmic portion of the chain corresponds to 208–336 (RQNRQFDKLS…NEQTPLQSRL (129 aa)). Residues 337-356 (DKLTSSIGKVGLLVAFLVLL) traverse the membrane as a helical segment. At 357–393 (VLLIRYFTGTTKDESGNREYNGKTTKSDEIVNAVVKM) the chain is on the lumenal side. A helical membrane pass occupies residues 394 to 411 (VAAAVTIIVVAIPEGLPL). Residues 412–802 (AVTLTLAYSM…KWGRCVYNNI (391 aa)) lie on the Cytoplasmic side of the membrane. Asp449 acts as the 4-aspartylphosphate intermediate in catalysis. Residues Asp747 and Asp751 each contribute to the Mg(2+) site. Residues 803 to 821 (QKFIQFQLTVNVAALVINF) form a helical membrane-spanning segment. Residues 822–832 (VAAVSAGDVPL) are Lumenal-facing. Residues 833–853 (TAVQLLWVNLIMDTLGALALA) form a helical membrane-spanning segment. Residues 854–873 (TEKPTNDLMKKKPIGRVAPL) lie on the Cytoplasmic side of the membrane. Residues 874-896 (ITNIMWRNLLAQAFYQISVLLVL) form a helical membrane-spanning segment. Over 897–905 (QFRGRSIFN) the chain is Lumenal. Residues 906-926 (VTEKVKNTLIFNTFVLCQVFN) form a helical membrane-spanning segment. Topologically, residues 927–944 (EFNARSLEKKNVFKGLHK) are cytoplasmic. Residues 945–966 (NRLFIGIIVVTVVLQVVMVEFL) form a helical membrane-spanning segment. Residues 967–976 (KRFADTERLN) lie on the Lumenal side of the membrane. A helical membrane pass occupies residues 977–998 (LGQWGVCIAIAAASWPIGWLVK). The Cytoplasmic segment spans residues 999 to 1002 (SVPV).

This sequence belongs to the cation transport ATPase (P-type) (TC 3.A.3) family. Type IIB subfamily.

It localises to the membrane. The enzyme catalyses Ca(2+)(in) + ATP + H2O = Ca(2+)(out) + ADP + phosphate + H(+). Its activity is regulated as follows. Activated by calmodulin. This magnesium-dependent enzyme catalyzes the hydrolysis of ATP coupled with the translocation of calcium from the cytosol out of the cell or into organelles. In Arabidopsis thaliana (Mouse-ear cress), this protein is Putative calcium-transporting ATPase 13, plasma membrane-type (ACA13).